The primary structure comprises 114 residues: Protein S40-2 (114 aa).

The segment at 23-50 (RYTKLYNSRNDEKKGTRRHETAEKTSPV) is disordered. A compositionally biased stretch (basic and acidic residues) spans 31 to 45 (RNDEKKGTRRHETAE).

Belongs to the senescence regulator S40 family.

The protein resides in the cytoplasm. The polypeptide is Protein S40-2 (Arabidopsis thaliana (Mouse-ear cress)).